Consider the following 133-residue polypeptide: Small ribosomal subunit protein uS8 (133 aa).

This sequence belongs to the universal ribosomal protein uS8 family. In terms of assembly, part of the 30S ribosomal subunit. Contacts proteins S5 and S12.

Functionally, one of the primary rRNA binding proteins, it binds directly to 16S rRNA central domain where it helps coordinate assembly of the platform of the 30S subunit. This Orientia tsutsugamushi (strain Boryong) (Rickettsia tsutsugamushi) protein is Small ribosomal subunit protein uS8.